Consider the following 227-residue polypeptide: Esterase Rv3036c (227 aa).

The chain crosses the membrane as a helical span at residues 3-23 (YLIATAVLVAVVLVGWPAAGA).

This sequence belongs to the RsiV family.

It localises to the cell membrane. The protein resides in the secreted. The protein localises to the cell wall. It catalyses the reaction a fatty acid ester + H2O = an aliphatic alcohol + a fatty acid + H(+). The catalysed reaction is an acetyl ester + H2O = an aliphatic alcohol + acetate + H(+). It carries out the reaction a butanoate ester + H2O = an aliphatic alcohol + butanoate + H(+). The enzyme catalyses a hexanoate ester + H2O = an aliphatic alcohol + hexanoate + H(+). It catalyses the reaction a dodecanoate ester + H2O = an aliphatic alcohol + dodecanoate + H(+). The catalysed reaction is a tetradecanoate ester + H2O = an aliphatic alcohol + tetradecanoate + H(+). It carries out the reaction an octanoate ester + H2O = an aliphatic alcohol + octanoate + H(+). Functionally, hydrolyzes ester substrates carbon chain lengths ranging from C2 to C14. In vitro, acetate (C2), butyrate (C4) and caprylate (C6) are hydrolyzed with high efficiency. Has lower activity against laurate (C12), myristate (C14) and caproate (C8), and weak activity against palmitate (C16). The sequence is that of Esterase Rv3036c from Mycobacterium tuberculosis (strain ATCC 25618 / H37Rv).